The chain runs to 487 residues: Glutamate--tRNA ligase 2 (487 aa).

The 'HIGH' region signature appears at 31–41; the sequence is PSPTGHLHVGG. Positions 254–258 match the 'KMSKS' region motif; sequence PLSKR. Lysine 257 contacts ATP.

The protein belongs to the class-I aminoacyl-tRNA synthetase family. Glutamate--tRNA ligase type 1 subfamily. As to quaternary structure, monomer.

Its subcellular location is the cytoplasm. It carries out the reaction tRNA(Glu) + L-glutamate + ATP = L-glutamyl-tRNA(Glu) + AMP + diphosphate. Catalyzes the attachment of glutamate to tRNA(Glu) in a two-step reaction: glutamate is first activated by ATP to form Glu-AMP and then transferred to the acceptor end of tRNA(Glu). The chain is Glutamate--tRNA ligase 2 from Thermotoga maritima (strain ATCC 43589 / DSM 3109 / JCM 10099 / NBRC 100826 / MSB8).